The primary structure comprises 423 residues: Dihydroorotase-like protein (423 aa).

Belongs to the metallo-dependent hydrolases superfamily. DHOase family. PyrC' subfamily. As to quaternary structure, heterododecamer of 6 active PyrB subunits and 6 non-catalytic PyrC' subunits.

Non-functional DHOase. The chain is Dihydroorotase-like protein (pyrC') from Pseudomonas aeruginosa (strain ATCC 15692 / DSM 22644 / CIP 104116 / JCM 14847 / LMG 12228 / 1C / PRS 101 / PAO1).